Reading from the N-terminus, the 601-residue chain is Elongation factor 4 (601 aa).

Residues 5 to 187 enclose the tr-type G domain; it reads EHIRNFSIIA…AIVERLPAPE (183 aa). Residues 17–22 and 134–137 each bind GTP; these read DHGKST and NKID.

It belongs to the TRAFAC class translation factor GTPase superfamily. Classic translation factor GTPase family. LepA subfamily.

The protein resides in the cell inner membrane. It carries out the reaction GTP + H2O = GDP + phosphate + H(+). Its function is as follows. Required for accurate and efficient protein synthesis under certain stress conditions. May act as a fidelity factor of the translation reaction, by catalyzing a one-codon backward translocation of tRNAs on improperly translocated ribosomes. Back-translocation proceeds from a post-translocation (POST) complex to a pre-translocation (PRE) complex, thus giving elongation factor G a second chance to translocate the tRNAs correctly. Binds to ribosomes in a GTP-dependent manner. The protein is Elongation factor 4 of Nitratidesulfovibrio vulgaris (strain ATCC 29579 / DSM 644 / CCUG 34227 / NCIMB 8303 / VKM B-1760 / Hildenborough) (Desulfovibrio vulgaris).